The following is a 315-amino-acid chain: 4-hydroxy-3-methylbut-2-enyl diphosphate reductase (315 aa).

C12 contacts [4Fe-4S] cluster. The (2E)-4-hydroxy-3-methylbut-2-enyl diphosphate site is built by H43 and H81. Residues H43 and H81 each contribute to the dimethylallyl diphosphate site. Positions 43 and 81 each coordinate isopentenyl diphosphate. Residue C103 coordinates [4Fe-4S] cluster. H131 contributes to the (2E)-4-hydroxy-3-methylbut-2-enyl diphosphate binding site. A dimethylallyl diphosphate-binding site is contributed by H131. H131 provides a ligand contact to isopentenyl diphosphate. E133 functions as the Proton donor in the catalytic mechanism. T170 provides a ligand contact to (2E)-4-hydroxy-3-methylbut-2-enyl diphosphate. Residue C198 coordinates [4Fe-4S] cluster. Residues S226, N228, and S271 each coordinate (2E)-4-hydroxy-3-methylbut-2-enyl diphosphate. 3 residues coordinate dimethylallyl diphosphate: S226, N228, and S271. Isopentenyl diphosphate-binding residues include S226, N228, and S271.

The protein belongs to the IspH family. Requires [4Fe-4S] cluster as cofactor.

It catalyses the reaction isopentenyl diphosphate + 2 oxidized [2Fe-2S]-[ferredoxin] + H2O = (2E)-4-hydroxy-3-methylbut-2-enyl diphosphate + 2 reduced [2Fe-2S]-[ferredoxin] + 2 H(+). The enzyme catalyses dimethylallyl diphosphate + 2 oxidized [2Fe-2S]-[ferredoxin] + H2O = (2E)-4-hydroxy-3-methylbut-2-enyl diphosphate + 2 reduced [2Fe-2S]-[ferredoxin] + 2 H(+). Its pathway is isoprenoid biosynthesis; dimethylallyl diphosphate biosynthesis; dimethylallyl diphosphate from (2E)-4-hydroxy-3-methylbutenyl diphosphate: step 1/1. The protein operates within isoprenoid biosynthesis; isopentenyl diphosphate biosynthesis via DXP pathway; isopentenyl diphosphate from 1-deoxy-D-xylulose 5-phosphate: step 6/6. Its function is as follows. Catalyzes the conversion of 1-hydroxy-2-methyl-2-(E)-butenyl 4-diphosphate (HMBPP) into a mixture of isopentenyl diphosphate (IPP) and dimethylallyl diphosphate (DMAPP). Acts in the terminal step of the DOXP/MEP pathway for isoprenoid precursor biosynthesis. The chain is 4-hydroxy-3-methylbut-2-enyl diphosphate reductase from Geobacillus sp. (strain WCH70).